The sequence spans 179 residues: tRNA (cytidine(56)-2'-O)-methyltransferase (179 aa).

S-adenosyl-L-methionine is bound by residues leucine 82, 112 to 116, and 130 to 137; these read GAEKV and VGNQPHSE.

It belongs to the aTrm56 family. In terms of assembly, homodimer.

The protein resides in the cytoplasm. The catalysed reaction is cytidine(56) in tRNA + S-adenosyl-L-methionine = 2'-O-methylcytidine(56) in tRNA + S-adenosyl-L-homocysteine + H(+). Functionally, specifically catalyzes the AdoMet-dependent 2'-O-ribose methylation of cytidine at position 56 in tRNAs. This chain is tRNA (cytidine(56)-2'-O)-methyltransferase, found in Methanococcus maripaludis (strain C7 / ATCC BAA-1331).